The primary structure comprises 391 residues: AN1-type zinc finger and UBX domain-containing protein DDB_G0268260 (391 aa).

Residues 1-16 (MQQQSPPTAPQQQQQQ) are compositionally biased toward low complexity. The disordered stretch occupies residues 1–20 (MQQQSPPTAPQQQQQQQRER). 2 consecutive AN1-type zinc fingers follow at residues 26–74 (DHIG…QREN) and 118–166 (APKS…IINS). Zn(2+) contacts are provided by cysteine 32, cysteine 37, cysteine 47, cysteine 50, cysteine 55, histidine 58, histidine 64, cysteine 66, cysteine 124, cysteine 129, cysteine 139, cysteine 142, cysteine 147, histidine 150, histidine 156, and cysteine 158. The segment covering 185–236 (NINNNINNNKNNNNNNNNNNNNNNNNNNNNNNNNNNNNNNNNNNNNNSNNNN) has biased composition (low complexity). The tract at residues 185–240 (NINNNINNNKNNNNNNNNNNNNNNNNNNNNNNNNNNNNNNNNNNNNNSNNNNKLIY) is disordered. The region spanning 278-356 (SSEEIGEIGI…GLLPVSTLYM (79 aa)) is the UBX domain.

The protein is AN1-type zinc finger and UBX domain-containing protein DDB_G0268260 of Dictyostelium discoideum (Social amoeba).